Reading from the N-terminus, the 231-residue chain is MRLVIARCSVDYVGRLKAHLPLATRLLLVKADGSVLVHSDGGSYKPLNWMSPPATLRVSSPEDVDLELGVAEQWTVQSAKTDDRLIINIHEKLSETSHDLGVDPGLIKDGVEADLQRLLADQIETLGTGYSLIRREYFTAIGPVDILARDGDGATVAIELKRRGDIDGVEQLTRYLELLNRDPLLAPVRGIFAAQQIKPQAKVLANDRGIDCVTLDYDAMRGVDDSESRLF.

Belongs to the NucS endonuclease family.

It localises to the cytoplasm. Cleaves both 3' and 5' ssDNA extremities of branched DNA structures. This Pseudarthrobacter chlorophenolicus (strain ATCC 700700 / DSM 12829 / CIP 107037 / JCM 12360 / KCTC 9906 / NCIMB 13794 / A6) (Arthrobacter chlorophenolicus) protein is Endonuclease NucS.